The chain runs to 436 residues: Protein GOLM2 (436 aa).

Methionine 1 carries the post-translational modification N-acetylmethionine. The Cytoplasmic portion of the chain corresponds to 1–14 (MVGFGANRRAGRLP). Residues 15-35 (SLVLVVLLVVIVVLAFNYWSI) form a helical; Signal-anchor for type II membrane protein membrane-spanning segment. Residues 35–198 (ISSRHVLLQE…EEQKQETQKI (164 aa)) are a coiled coil. The Lumenal portion of the chain corresponds to 36 to 436 (SSRHVLLQEE…YGKQHFNDVL (401 aa)). Residues 225 to 247 (ADKNEEPSSNHIPHGKEQIKRGG) are compositionally biased toward basic and acidic residues. Residues 225-436 (ADKNEEPSSN…YGKQHFNDVL (212 aa)) form a disordered region. Serine 233 and serine 275 each carry phosphoserine. The segment covering 305-321 (NHNGNPGTSKQNPSSPL) has biased composition (polar residues). Phosphoserine is present on residues serine 328 and serine 332. The segment covering 344-362 (ATKDRVSDFHKLKQSRFFD) has biased composition (basic and acidic residues). Position 366 is a phosphoserine (serine 366). Positions 399–418 (YNEEEDGDGGEEDVQDDEER) are enriched in acidic residues. The span at 426–436 (DYGKQHFNDVL) shows a compositional bias: basic and acidic residues.

Belongs to the GOLM family.

The protein localises to the membrane. In Homo sapiens (Human), this protein is Protein GOLM2.